We begin with the raw amino-acid sequence, 392 residues long: Fasciculation and elongation protein zeta-1 (392 aa).

Residues Met-1–His-37 form a disordered region. Ser-58 is subject to Phosphoserine. Residues Met-175 to Ser-198 form a disordered region. Over residues Asp-180–Gly-194 the composition is skewed to acidic residues. The stretch at Ser-230–Ser-298 forms a coiled coil. Phosphoserine occurs at positions 298 and 316.

Belongs to the zygin family. As to quaternary structure, homodimer; disulfide-linked. May form heterodimers with FEZ2. Interacts with the NH2-terminal variable region (V1) of PKC zeta and weakly with that of PKC epsilon. Interacts with UBE4B. Interacts with SAP30L. Interacts with SCOC and ULK1; SCOC interferes with ULK1-binding to FEZ1. Directly interacts with SCOC and UVRAG. Stabilizes the interaction between SCOC and UVRAG during amino acid starvation. Phosphorylated by protein kinase C zeta; which enhances interaction with UBE4B and polyubiquitination. Post-translationally, polyubiquitinated in a UBE4B-dependent manner; which does not lead to proteasomal degradation and may be important for neurogenic activity. Polyubiquitin linkage seems to be mainly through Lys-26. As to expression, mainly expressed in brain.

Its subcellular location is the cytoplasm. The protein localises to the cytoskeleton. The protein resides in the microtubule organizing center. It localises to the centrosome. It is found in the cell membrane. In terms of biological role, may be involved in axonal outgrowth as component of the network of molecules that regulate cellular morphology and axon guidance machinery. Able to restore partial locomotion and axonal fasciculation to C.elegans unc-76 mutants in germline transformation experiments. May participate in the transport of mitochondria and other cargos along microtubules. In Homo sapiens (Human), this protein is Fasciculation and elongation protein zeta-1 (FEZ1).